Consider the following 309-residue polypeptide: Homoserine O-succinyltransferase (309 aa).

The active-site Acyl-thioester intermediate is Cys-142. Substrate contacts are provided by Lys-163 and Ser-192. His-235 serves as the catalytic Proton acceptor. Residue Glu-237 is part of the active site. Residue Arg-249 coordinates substrate.

This sequence belongs to the MetA family. As to quaternary structure, homodimer.

It localises to the cytoplasm. It carries out the reaction L-homoserine + succinyl-CoA = O-succinyl-L-homoserine + CoA. The protein operates within amino-acid biosynthesis; L-methionine biosynthesis via de novo pathway; O-succinyl-L-homoserine from L-homoserine: step 1/1. Its function is as follows. Transfers a succinyl group from succinyl-CoA to L-homoserine, forming succinyl-L-homoserine. The polypeptide is Homoserine O-succinyltransferase (Escherichia coli (strain SE11)).